Here is a 326-residue protein sequence, read N- to C-terminus: Methionine import ATP-binding protein MetN (326 aa).

The 226-residue stretch at 1–226 folds into the ABC transporter domain; that stretch reads MVFYTIGPQT…PQQPITRQFV (226 aa). 23–30 lines the ATP pocket; sequence GYSGAGKS.

The protein belongs to the ABC transporter superfamily. Methionine importer (TC 3.A.1.24) family. The complex is composed of two ATP-binding proteins (MetN), two transmembrane proteins (MetI) and a solute-binding protein (MetQ).

Its subcellular location is the cell inner membrane. It catalyses the reaction L-methionine(out) + ATP + H2O = L-methionine(in) + ADP + phosphate + H(+). It carries out the reaction D-methionine(out) + ATP + H2O = D-methionine(in) + ADP + phosphate + H(+). Functionally, part of the ABC transporter complex MetNIQ involved in methionine import. Responsible for energy coupling to the transport system. This is Methionine import ATP-binding protein MetN from Erwinia pyrifoliae (strain DSM 12162 / Ep1/96).